We begin with the raw amino-acid sequence, 217 residues long: 3,4-dihydroxy-2-butanone 4-phosphate synthase (217 aa).

Residues 37 to 38, Asp-42, 150 to 154, and Glu-174 contribute to the D-ribulose 5-phosphate site; these read RE and RRGHT. Glu-38 lines the Mg(2+) pocket. Residue His-153 participates in Mg(2+) binding.

Belongs to the DHBP synthase family. Homodimer. Mg(2+) serves as cofactor. It depends on Mn(2+) as a cofactor.

It catalyses the reaction D-ribulose 5-phosphate = (2S)-2-hydroxy-3-oxobutyl phosphate + formate + H(+). It functions in the pathway cofactor biosynthesis; riboflavin biosynthesis; 2-hydroxy-3-oxobutyl phosphate from D-ribulose 5-phosphate: step 1/1. In terms of biological role, catalyzes the conversion of D-ribulose 5-phosphate to formate and 3,4-dihydroxy-2-butanone 4-phosphate. The sequence is that of 3,4-dihydroxy-2-butanone 4-phosphate synthase from Desulforapulum autotrophicum (strain ATCC 43914 / DSM 3382 / VKM B-1955 / HRM2) (Desulfobacterium autotrophicum).